The following is a 491-amino-acid chain: Dipeptide and tripeptide permease B (491 aa).

The Cytoplasmic portion of the chain corresponds to 1–26 (MNNTAPGLLHQPKPFFMIFFVELWER). Residues 27–47 (FGYYGVQGILAVFFVKQLGFS) form a helical membrane-spanning segment. At 48–51 (QEQA) the chain is on the periplasmic side. Residues 52–72 (FITFGAFAALVYGLISIGGYV) traverse the membrane as a helical segment. Residues 73–81 (GDHLLGTKR) are Cytoplasmic-facing. Residues 82–102 (TMVLGAIVLALGYFMTGMSLL) traverse the membrane as a helical segment. Residues 103 to 105 (KPE) lie on the Periplasmic side of the membrane. The chain crosses the membrane as a helical span at residues 106-126 (MIFIALGTIAVGNGLFKANPA). Over 127–145 (SLLSKCYPPKDPRLDGAFT) the chain is Cytoplasmic. A helical transmembrane segment spans residues 146-166 (LFYMSINIGSLLSLSLAPIIA). The Periplasmic segment spans residues 167–171 (ERFGY). Residues 172 to 192 (AVTYNLCGLGLIIALLVYFAC) traverse the membrane as a helical segment. Over 193–210 (RGMVRSIGSAPDHQPLNY) the chain is Cytoplasmic. A helical transmembrane segment spans residues 211–231 (GKLLLVLAGAVVMIFLCAWLM). A topological domain (periplasmic) is located at residue His-232. The chain crosses the membrane as a helical span at residues 233–253 (NVGVANIVLIAVSAVVLYFFF). Residues 254 to 266 (REAFKQDKTGRNR) lie on the Cytoplasmic side of the membrane. A helical transmembrane segment spans residues 267-287 (MFVAFILMIEAVLFYILYAQM). At 288 to 312 (PTSLNFFAINNVRHELLGFAINPVS) the chain is on the periplasmic side. Residues 313–335 (FQALNPFWVVVASPILASIYTRL) form a helical membrane-spanning segment. Residues 336-349 (GSRGRDMTMPTKFT) are Cytoplasmic-facing. Residues 350 to 370 (LGMLLCSLGFLTAAAAGMWFA) form a helical membrane-spanning segment. The Periplasmic portion of the chain corresponds to 371–378 (DAQGLTSP). A helical transmembrane segment spans residues 379-399 (WFVVLVYLFQSLGELMISALG). Residues 400-423 (LAMVAALVPQYLMGFILGMWFLTQ) are Cytoplasmic-facing. Residues 424–444 (AAAFLLGGYVATFTAVPAGIH) traverse the membrane as a helical segment. At 445-454 (DPLQTLPIYT) the chain is on the periplasmic side. A helical transmembrane segment spans residues 455 to 475 (GVFGKIGIATLIVTLVMAAMV). Residues 476-491 (PWLNRMMNTPADGQKA) are Cytoplasmic-facing.

It belongs to the major facilitator superfamily. Proton-dependent oligopeptide transporter (POT/PTR) (TC 2.A.17) family. DtpB subfamily.

Its subcellular location is the cell inner membrane. In terms of biological role, proton-dependent permease that transports di- and tripeptides. In Edwardsiella piscicida, this protein is Dipeptide and tripeptide permease B.